We begin with the raw amino-acid sequence, 120 residues long: MSKLKVTNARRKQRVRLSLRRTANGRPRLSVFRSSKHIYAQVIDDLKGETLASASSLEKTMRDAGNTGANIDAAKAVGKLLAERAVKNGVKEVVFDRGSYLYHGRVKALADAARESGLSF.

The protein belongs to the universal ribosomal protein uL18 family. Part of the 50S ribosomal subunit; part of the 5S rRNA/L5/L18/L25 subcomplex. Contacts the 5S and 23S rRNAs.

Its function is as follows. This is one of the proteins that bind and probably mediate the attachment of the 5S RNA into the large ribosomal subunit, where it forms part of the central protuberance. The polypeptide is Large ribosomal subunit protein uL18 (Nitrobacter hamburgensis (strain DSM 10229 / NCIMB 13809 / X14)).